A 256-amino-acid polypeptide reads, in one-letter code: Thiazole synthase (256 aa).

The Schiff-base intermediate with DXP role is filled by lysine 98. 1-deoxy-D-xylulose 5-phosphate is bound by residues glycine 159, 185–186 (AG), and 207–208 (NT).

Belongs to the ThiG family. In terms of assembly, homotetramer. Forms heterodimers with either ThiH or ThiS.

It is found in the cytoplasm. The enzyme catalyses [ThiS sulfur-carrier protein]-C-terminal-Gly-aminoethanethioate + 2-iminoacetate + 1-deoxy-D-xylulose 5-phosphate = [ThiS sulfur-carrier protein]-C-terminal Gly-Gly + 2-[(2R,5Z)-2-carboxy-4-methylthiazol-5(2H)-ylidene]ethyl phosphate + 2 H2O + H(+). The protein operates within cofactor biosynthesis; thiamine diphosphate biosynthesis. Catalyzes the rearrangement of 1-deoxy-D-xylulose 5-phosphate (DXP) to produce the thiazole phosphate moiety of thiamine. Sulfur is provided by the thiocarboxylate moiety of the carrier protein ThiS. In vitro, sulfur can be provided by H(2)S. The polypeptide is Thiazole synthase (Syntrophobacter fumaroxidans (strain DSM 10017 / MPOB)).